Reading from the N-terminus, the 467-residue chain is ADAM DEC1 (467 aa).

An N-terminal signal peptide occupies residues 1–33 (MLPGTSRLPTEASMSWVLLSVLWLIIQIQVIDA). Residues 34–208 (TLTPELKPHE…LRTSRSLKNP (175 aa)) constitute a propeptide that is removed on maturation. N-linked (GlcNAc...) asparagine glycans are attached at residues N61 and N236. A Peptidase M12B domain is found at 217 to 411 (KYIGLFLVLD…RNARCLLLAP (195 aa)). Disulfide bonds link C327–C406 and C368–C373. Position 351 (H351) interacts with Zn(2+). E352 is an active-site residue. Zn(2+)-binding residues include H355 and D361. Residues 418-467 (KPTCGNQVLDVGEECDCGSPEECTNLCCEPLTCRLKSQPDCSEASNHITE) enclose the Disintegrin domain.

Zn(2+) is required as a cofactor. In terms of tissue distribution, expressed highly in uterus during pregnancy.

The protein localises to the secreted. May play an important role in the control of the immune response and during pregnancy. This is ADAM DEC1 (Adamdec1) from Mus musculus (Mouse).